Here is a 284-residue protein sequence, read N- to C-terminus: MTAQIIDGKAIAQSIRTQLREKVTARKEAGQRVPGLAVILVGADPASQVYVGSKRKACEEVGFISRSYDLDTSYTEEALLALIDELNDDPTIDGILVQLPLPAHIEDSKVIERIRPDKDVDGFHPYNVGRLAQRIPVLRSCTPMGIMTLIKSTGVDTYGLDAVVVGASNIVGRPMTLELLLAGCTTTTCHRFTKNLEQKIRQADLVVVAVGKPGFIPGEWIKPGAIVIDVGINRLENGTLVGDVQYEVAAQNASFITPVPGGVGPMTIASLLENTLYAAEQYHD.

NADP(+) contacts are provided by residues 166–168 (GAS) and I232.

Belongs to the tetrahydrofolate dehydrogenase/cyclohydrolase family. Homodimer.

The enzyme catalyses (6R)-5,10-methylene-5,6,7,8-tetrahydrofolate + NADP(+) = (6R)-5,10-methenyltetrahydrofolate + NADPH. It catalyses the reaction (6R)-5,10-methenyltetrahydrofolate + H2O = (6R)-10-formyltetrahydrofolate + H(+). It functions in the pathway one-carbon metabolism; tetrahydrofolate interconversion. Catalyzes the oxidation of 5,10-methylenetetrahydrofolate to 5,10-methenyltetrahydrofolate and then the hydrolysis of 5,10-methenyltetrahydrofolate to 10-formyltetrahydrofolate. This Shewanella sp. (strain MR-7) protein is Bifunctional protein FolD.